The primary structure comprises 337 residues: Anthranilate phosphoribosyltransferase (337 aa).

5-phospho-alpha-D-ribose 1-diphosphate is bound by residues G82, 85 to 86 (GD), T90, 92 to 95 (NIST), 110 to 118 (KHGGRSVSS), and S122. An anthranilate-binding site is contributed by G82. Mg(2+) is bound at residue S94. Position 168 (R168) interacts with anthranilate. D226 and E227 together coordinate Mg(2+).

It belongs to the anthranilate phosphoribosyltransferase family. In terms of assembly, homodimer. Mg(2+) serves as cofactor.

The enzyme catalyses N-(5-phospho-beta-D-ribosyl)anthranilate + diphosphate = 5-phospho-alpha-D-ribose 1-diphosphate + anthranilate. The protein operates within amino-acid biosynthesis; L-tryptophan biosynthesis; L-tryptophan from chorismate: step 2/5. Its function is as follows. Catalyzes the transfer of the phosphoribosyl group of 5-phosphorylribose-1-pyrophosphate (PRPP) to anthranilate to yield N-(5'-phosphoribosyl)-anthranilate (PRA). This chain is Anthranilate phosphoribosyltransferase, found in Francisella tularensis subsp. mediasiatica (strain FSC147).